We begin with the raw amino-acid sequence, 189 residues long: Peptide deformylase (189 aa).

Fe cation contacts are provided by cysteine 93 and histidine 135. Residue glutamate 136 is part of the active site. Histidine 139 lines the Fe cation pocket.

This sequence belongs to the polypeptide deformylase family. Requires Fe(2+) as cofactor.

It catalyses the reaction N-terminal N-formyl-L-methionyl-[peptide] + H2O = N-terminal L-methionyl-[peptide] + formate. Its function is as follows. Removes the formyl group from the N-terminal Met of newly synthesized proteins. Requires at least a dipeptide for an efficient rate of reaction. N-terminal L-methionine is a prerequisite for activity but the enzyme has broad specificity at other positions. The protein is Peptide deformylase of Karelsulcia muelleri (strain GWSS) (Sulcia muelleri).